The sequence spans 426 residues: Alpha-ionylideneethane synthase abl3 (426 aa).

It belongs to the alpha-ionylideneethane synthase family.

Its pathway is hormone biosynthesis. Its function is as follows. Alpha-ionylideneethane synthase; part of the gene cluster that mediates the biosynthesis of abscisic acid (ABA), a phytohormone that acts antagonistically toward salicylic acid (SA), jasmonic acid (JA) and ethylene (ETH) signaling, to impede plant defense responses. The first step of the pathway catalyzes the reaction from farnesyl diphosphate to alpha-ionylideneethane performed by the alpha-ionylideneethane synthase abl3 via a three-step reaction mechanism involving 2 neutral intermediates, beta-farnesene and allofarnesene. The cytochrome P450 monooxygenase abl1 might then be involved in the conversion of alpha-ionylideneethane to alpha-ionylideneacetic acid. Alpha-ionylideneacetic acid is further converted to abscisic acid in 2 steps involving the cytochrome P450 monooxygenase abl2 and the short-chain dehydrogenase/reductase abl4, via the intermediates 1'-deoxy-ABA or 1',4'-trans-diol-ABA, depending on the order of action of these 2 enzymes. Abl2 is responsible for the hydroxylation of carbon atom C-1' and abl4 might be involved in the oxidation of the C-4' carbon atom. This is Alpha-ionylideneethane synthase abl3 from Leptosphaeria maculans (strain JN3 / isolate v23.1.3 / race Av1-4-5-6-7-8) (Blackleg fungus).